The chain runs to 198 residues: Na(+)-translocating NADH-quinone reductase subunit E (198 aa).

6 helical membrane passes run 11–31, 35–55, 77–97, 109–129, 140–160, and 176–196; these read AVFVENMALAFFLGMCTFLAV, VSTAFGLGIAVTVVLGISVPA, FLNFITFIGVIAAIVQVLEMI, LGIFLPLITVNCAIFGGVSFM, IVYGFGSGIGWMLAIVALAGI, and LGITFITTGLMALGFMSFSGV.

It belongs to the NqrDE/RnfAE family. As to quaternary structure, composed of six subunits; NqrA, NqrB, NqrC, NqrD, NqrE and NqrF.

It is found in the cell inner membrane. The enzyme catalyses a ubiquinone + n Na(+)(in) + NADH + H(+) = a ubiquinol + n Na(+)(out) + NAD(+). NQR complex catalyzes the reduction of ubiquinone-1 to ubiquinol by two successive reactions, coupled with the transport of Na(+) ions from the cytoplasm to the periplasm. NqrA to NqrE are probably involved in the second step, the conversion of ubisemiquinone to ubiquinol. This chain is Na(+)-translocating NADH-quinone reductase subunit E, found in Yersinia enterocolitica serotype O:8 / biotype 1B (strain NCTC 13174 / 8081).